Reading from the N-terminus, the 148-residue chain is IQ domain-containing protein F5 (148 aa).

IQ domains lie at 11–40 (ERSAAVFIQAWWRGMLVRRTLLHAALRAWI) and 67–96 (QEWAAVRLQSWVRMWCVRQRYCRLLNAVRI).

In Homo sapiens (Human), this protein is IQ domain-containing protein F5 (IQCF5).